Here is a 37-residue protein sequence, read N- to C-terminus: Lambda-hexatoxin-Hv1c (37 aa).

4 disulfides stabilise this stretch: Cys-3-Cys-17, Cys-10-Cys-22, Cys-13-Cys-14, and Cys-16-Cys-32.

This sequence belongs to the neurotoxin 11 (kappa toxin) family. Expressed by the venom gland.

Its subcellular location is the secreted. This excitatory toxin inhibits insect calcium-activated potassium (KCa) channels (Slo-type). Pan-neuronal expression in Drosophila is lethal but flies engineered to express the toxin only in clock neurons have defects in circadian rhythm but a normal lifespan. The polypeptide is Lambda-hexatoxin-Hv1c (Hadronyche versuta (Blue mountains funnel-web spider)).